The chain runs to 505 residues: 2-methylcitrate dehydratase (505 aa).

Belongs to the PrpD family. In terms of assembly, monomer.

It carries out the reaction (2S,3S)-2-methylcitrate = 2-methyl-cis-aconitate + H2O. The enzyme catalyses citrate = D-threo-isocitrate. Its pathway is organic acid metabolism; propanoate degradation. It participates in carbohydrate metabolism; tricarboxylic acid cycle; isocitrate from oxaloacetate: step 1/2. Its function is as follows. Involved in the catabolism of short chain fatty acids (SCFA) via the tricarboxylic acid (TCA)(acetyl degradation route) and via the 2-methylcitrate cycle I (propionate degradation route). Catalyzes the dehydration of 2-methylcitrate (2-MC) to yield the cis isomer of 2-methyl-aconitate. Could also catalyze the dehydration of citrate and the hydration of cis-aconitate. This chain is 2-methylcitrate dehydratase, found in Mycobacterium tuberculosis (strain ATCC 35801 / TMC 107 / Erdman).